The sequence spans 571 residues: Isthmin-2 (571 aa).

The N-terminal stretch at 1–26 (MRALRDRAGLLLCVLLLAALLEAALG) is a signal peptide. Disordered stretches follow at residues 30–60 (KKPR…LKEE), 116–141 (ANTT…LREE), and 257–294 (EKDR…DEEE). Polar residues predominate over residues 116 to 131 (ANTTLSTPNPDTQASA). An N-linked (GlcNAc...) asparagine glycan is attached at Asn-117. Residues 257 to 268 (EKDRAPGEKGEE) are compositionally biased toward basic and acidic residues. Over residues 269 to 294 (KEEDEDYPSEDIEGEDQEDKEEDEEE) the composition is skewed to acidic residues. N-linked (GlcNAc...) asparagine glycosylation occurs at Asn-300. A TSP type-1 domain is found at 327-371 (EPQKEWSPWSPCSGNCSTGKQQRTRPCGYGCTATETRTCDLPSCP). 3 cysteine pairs are disulfide-bonded: Cys-338/Cys-365, Cys-342/Cys-370, and Cys-353/Cys-357. An N-linked (GlcNAc...) asparagine glycan is attached at Asn-392. Positions 396–559 (MHDQDVDSCE…RACTDNPLEE (164 aa)) constitute an AMOP domain.

Belongs to the isthmin family. As to expression, expressed at high levels in the placenta and at moderate levels in the pancreas, kidney, heart, liver, lung, brain and skeletal muscle.

It localises to the secreted. This chain is Isthmin-2 (ISM2), found in Homo sapiens (Human).